A 542-amino-acid polypeptide reads, in one-letter code: Pre-mRNA-splicing factor 38B (542 aa).

Over residues 1-12 (MANNSPALTGNS) the composition is skewed to polar residues. The interval 1–24 (MANNSPALTGNSQPQHQAAAAVVQ) is disordered. A2 is modified (N-acetylalanine). S5 carries the post-translational modification Phosphoserine. The segment covering 13–24 (QPQHQAAAAVVQ) has biased composition (low complexity). The residue at position 227 (K227) is an N6-acetyllysine. Positions 232–542 (QIKTRPRKIK…KEHKNKDETV (311 aa)) are disordered. Residues 243 to 255 (DGKEGVEEIDRHI) are compositionally biased toward basic and acidic residues. Basic residues predominate over residues 256–284 (ERRRSRSPRRSLSPRRSPRRSRSRSHHRD). Phosphoserine occurs at positions 288, 290, 318, and 320. Residues 291–327 (FDRELEREKERQRLEREAKEREKERRRSRSLDRGLDR) are compositionally biased toward basic and acidic residues. Positions 292 to 323 (DRELEREKERQRLEREAKEREKERRRSRSLDR) form a coiled coil. Residues 328–344 (RRSRSRERHRSRSRSRD) are compositionally biased toward basic residues. A compositionally biased stretch (basic and acidic residues) spans 345–418 (RKGDRRDRDR…DRRHRDDKKE (74 aa)). Residues 419 to 448 (SKKKHSRSRSRERKHRSRSRSRNAGKRSRS) are compositionally biased toward basic residues. S446 is modified (phosphoserine). Over residues 449–466 (RSKDKASKHKNESKEKSN) the composition is skewed to basic and acidic residues. A phosphoserine mark is found at S471, S473, and S479. Basic and acidic residues-rich tracts occupy residues 479 to 492 (SVEK…PSRE) and 499 to 522 (RSQD…DHQR). S523, S525, and S530 each carry phosphoserine. The segment covering 530–542 (SQEKEHKNKDETV) has biased composition (basic and acidic residues).

Belongs to the PRP38 family.

The protein resides in the nucleus. Its function is as follows. May be required for pre-mRNA splicing. This chain is Pre-mRNA-splicing factor 38B (Prpf38b), found in Rattus norvegicus (Rat).